The chain runs to 289 residues: MRKFTAFACGTGAGLLTFYLTKLNEPKAAVHNSWTRSEKPVDPCALWDHNWDLRDPKSLVKPVKNDLSQEQNRYNSELEKVVPKHARHIILIRHGEYLDVGDTDETHHLTERGREQAKYTGKRLCELGIKWDKVIASTMVRAQETADIILNEIDYEKAKVKNCAFLREGAPIPPQPPVGHWKPEASQFFRDGARIEAAFRRYFYRAYPDQTKDSYTLLVGHGNVIRYFVCRALQFPPEAWLRISINHASITWLTISPSGNVSIKYLGDTGFMPVNHLTNRIPRAAKNVV.

The chain crosses the membrane as a helical span at residues 7 to 23 (FACGTGAGLLTFYLTKL).

It belongs to the phosphoglycerate mutase family. BPG-dependent PGAM subfamily. Interacts with Pk92B/ASK1.

Its subcellular location is the mitochondrion outer membrane. It catalyses the reaction O-phospho-L-seryl-[protein] + H2O = L-seryl-[protein] + phosphate. It carries out the reaction O-phospho-L-threonyl-[protein] + H2O = L-threonyl-[protein] + phosphate. Functionally, displays phosphatase activity for serine/threonine residues, and dephosphorylates and activates Pk92B kinase. Has apparently no phosphoglycerate mutase activity. This Drosophila pseudoobscura pseudoobscura (Fruit fly) protein is Serine/threonine-protein phosphatase Pgam5, mitochondrial (Pgam5).